A 512-amino-acid polypeptide reads, in one-letter code: Apolipoprotein N-acyltransferase (512 aa).

6 helical membrane-spanning segments follow: residues 5–25, 56–76, 92–112, 118–138, 168–188, and 195–215; these read LDKY…FAAA, FAVS…FYWI, VPLT…CFWL, LPRG…TEFA, FGGI…LVLA, and SGKR…GYTA. Positions 233–477 constitute a CN hydrolase domain; the sequence is LQGNIDQTLK…ETVLEGHIKG (245 aa). Glu-271 acts as the Proton acceptor in catalysis. The active site involves Lys-337. The active-site Nucleophile is the Cys-389. A helical transmembrane segment spans residues 487 to 507; it reads TGSSWWLMGILTLAALILFIF.

Belongs to the CN hydrolase family. Apolipoprotein N-acyltransferase subfamily.

It localises to the cell inner membrane. It carries out the reaction N-terminal S-1,2-diacyl-sn-glyceryl-L-cysteinyl-[lipoprotein] + a glycerophospholipid = N-acyl-S-1,2-diacyl-sn-glyceryl-L-cysteinyl-[lipoprotein] + a 2-acyl-sn-glycero-3-phospholipid + H(+). The protein operates within protein modification; lipoprotein biosynthesis (N-acyl transfer). Its function is as follows. Catalyzes the phospholipid dependent N-acylation of the N-terminal cysteine of apolipoprotein, the last step in lipoprotein maturation. This chain is Apolipoprotein N-acyltransferase, found in Neisseria meningitidis serogroup A / serotype 4A (strain DSM 15465 / Z2491).